Here is a 276-residue protein sequence, read N- to C-terminus: Dermonecrotic toxin LlSicTox-alphaIV2iv (276 aa).

The active site involves histidine 5. The Mg(2+) site is built by glutamate 25 and aspartate 27. Histidine 41 (nucleophile) is an active-site residue. Disulfide bonds link cysteine 45–cysteine 51 and cysteine 47–cysteine 193. Aspartate 85 serves as a coordination point for Mg(2+).

This sequence belongs to the arthropod phospholipase D family. Class II subfamily. Mg(2+) is required as a cofactor. Expressed by the venom gland.

It is found in the secreted. The enzyme catalyses an N-(acyl)-sphingosylphosphocholine = an N-(acyl)-sphingosyl-1,3-cyclic phosphate + choline. The catalysed reaction is an N-(acyl)-sphingosylphosphoethanolamine = an N-(acyl)-sphingosyl-1,3-cyclic phosphate + ethanolamine. It carries out the reaction a 1-acyl-sn-glycero-3-phosphocholine = a 1-acyl-sn-glycero-2,3-cyclic phosphate + choline. It catalyses the reaction a 1-acyl-sn-glycero-3-phosphoethanolamine = a 1-acyl-sn-glycero-2,3-cyclic phosphate + ethanolamine. Dermonecrotic toxins cleave the phosphodiester linkage between the phosphate and headgroup of certain phospholipids (sphingolipid and lysolipid substrates), forming an alcohol (often choline) and a cyclic phosphate. This toxin acts on sphingomyelin (SM). It may also act on ceramide phosphoethanolamine (CPE), lysophosphatidylcholine (LPC) and lysophosphatidylethanolamine (LPE), but not on lysophosphatidylserine (LPS), and lysophosphatidylglycerol (LPG). It acts by transphosphatidylation, releasing exclusively cyclic phosphate products as second products. Induces dermonecrosis, hemolysis, increased vascular permeability, edema, inflammatory response, and platelet aggregation. The protein is Dermonecrotic toxin LlSicTox-alphaIV2iv of Loxosceles laeta (South American recluse spider).